The following is a 416-amino-acid chain: Serine hydroxymethyltransferase (416 aa).

Residues leucine 118 and 122–124 (GHL) each bind (6S)-5,6,7,8-tetrahydrofolate. Lysine 226 is modified (N6-(pyridoxal phosphate)lysine). Residues glutamate 242 and 350 to 352 (SPF) contribute to the (6S)-5,6,7,8-tetrahydrofolate site.

It belongs to the SHMT family. In terms of assembly, homodimer. The cofactor is pyridoxal 5'-phosphate.

It is found in the cytoplasm. The catalysed reaction is (6R)-5,10-methylene-5,6,7,8-tetrahydrofolate + glycine + H2O = (6S)-5,6,7,8-tetrahydrofolate + L-serine. Its pathway is one-carbon metabolism; tetrahydrofolate interconversion. It functions in the pathway amino-acid biosynthesis; glycine biosynthesis; glycine from L-serine: step 1/1. Functionally, catalyzes the reversible interconversion of serine and glycine with tetrahydrofolate (THF) serving as the one-carbon carrier. This reaction serves as the major source of one-carbon groups required for the biosynthesis of purines, thymidylate, methionine, and other important biomolecules. Also exhibits THF-independent aldolase activity toward beta-hydroxyamino acids, producing glycine and aldehydes, via a retro-aldol mechanism. This chain is Serine hydroxymethyltransferase, found in Helicobacter hepaticus (strain ATCC 51449 / 3B1).